A 112-amino-acid chain; its full sequence is Large ribosomal subunit protein bL17 (112 aa).

It belongs to the bacterial ribosomal protein bL17 family. As to quaternary structure, part of the 50S ribosomal subunit. Contacts protein L32.

This is Large ribosomal subunit protein bL17 from Thermoanaerobacter pseudethanolicus (strain ATCC 33223 / 39E) (Clostridium thermohydrosulfuricum).